A 195-amino-acid polypeptide reads, in one-letter code: dCTP deaminase (195 aa).

Residues 109 to 114 (RSSLAR), D127, 135 to 137 (TLE), Y170, K177, and Q181 contribute to the dCTP site. Catalysis depends on E137, which acts as the Proton donor/acceptor.

This sequence belongs to the dCTP deaminase family. Homotrimer.

The enzyme catalyses dCTP + H2O + H(+) = dUTP + NH4(+). Its pathway is pyrimidine metabolism; dUMP biosynthesis; dUMP from dCTP (dUTP route): step 1/2. Its function is as follows. Catalyzes the deamination of dCTP to dUTP. This is dCTP deaminase from Rhodospirillum rubrum (strain ATCC 11170 / ATH 1.1.1 / DSM 467 / LMG 4362 / NCIMB 8255 / S1).